A 129-amino-acid polypeptide reads, in one-letter code: Phosphoribosyl-AMP cyclohydrolase (129 aa).

D77 is a binding site for Mg(2+). Residue C78 coordinates Zn(2+). Mg(2+)-binding residues include D79 and D81. Positions 94 and 101 each coordinate Zn(2+).

This sequence belongs to the PRA-CH family. In terms of assembly, homodimer. Mg(2+) is required as a cofactor. The cofactor is Zn(2+).

It is found in the cytoplasm. The enzyme catalyses 1-(5-phospho-beta-D-ribosyl)-5'-AMP + H2O = 1-(5-phospho-beta-D-ribosyl)-5-[(5-phospho-beta-D-ribosylamino)methylideneamino]imidazole-4-carboxamide. The protein operates within amino-acid biosynthesis; L-histidine biosynthesis; L-histidine from 5-phospho-alpha-D-ribose 1-diphosphate: step 3/9. Its function is as follows. Catalyzes the hydrolysis of the adenine ring of phosphoribosyl-AMP. This Methanosphaera stadtmanae (strain ATCC 43021 / DSM 3091 / JCM 11832 / MCB-3) protein is Phosphoribosyl-AMP cyclohydrolase.